The sequence spans 379 residues: TTEGKVIKCKAAIAWEAGKPLSVEEIEVSPPKDHEVRVKIVATGVCRTDEHAINPSFKEGVFPVILGHEGAGIVESIGQGVSKFKPGDKVIPLYMPQCGHCKFCLNPKTNLCEKISKIKTPISDQEVMSDGTSRFTCKGKPIYHFMGTSTFSEYTVVSESSLAKIDAAAPLDKVCLIGCGFSTGYGAAINTAQVEPGSTCAVFGLGGVGLSAVMGCKAAGASKIFGIDINKDKFPLAKKLGATDCLNPQDIRKPVQEIIAEMTNGGVDFAIECIGNPDVMKAAFESTTVGWGTCVIVGVAVGEQSIPFSPMQLIMGRKIKATFFGGWKSVKSVPKLVSDYMAKKFDLDALVSHTLPLDKINDAFDLMNAGKSNRTILVF.

At T1 the chain carries N-acetylthreonine. Zn(2+) is bound by residues C46, H68, C98, C101, C104, C112, and C179. NAD(+)-binding positions include 204–209 (GLGGVG), D228, K233, 297–299 (VGV), and R374.

Belongs to the zinc-containing alcohol dehydrogenase family. Class-II subfamily. As to quaternary structure, homodimer. It depends on Zn(2+) as a cofactor.

It localises to the cytoplasm. The catalysed reaction is all-trans-retinol + NAD(+) = all-trans-retinal + NADH + H(+). It carries out the reaction 9-cis-retinol + NAD(+) = 9-cis-retinal + NADH + H(+). It catalyses the reaction 20-oxo-(5Z,8Z,11Z,14Z)-eicosatetraenoate + NAD(+) + H2O = (5Z,8Z,11Z,14Z)-eicosatetraenedioate + NADH + 2 H(+). The enzyme catalyses 20-hydroxy-(5Z,8Z,11Z,14Z)-eicosatetraenoate + NAD(+) = 20-oxo-(5Z,8Z,11Z,14Z)-eicosatetraenoate + NADH + H(+). The catalysed reaction is 1,4-benzoquinone + NADH + H(+) = hydroquinone + NAD(+). Its activity is regulated as follows. Oxidation of 20-HETE is inhibited by low concentrations of N-heptylformamide. Oxidation of 20-HETE is a decreased by 55-65% by either all-trans-retinol or all-trans-retinoic acid. Strongly inhibited by omega-hydroxy fatty acids. Functionally, catalyzes the NAD-dependent oxidation of either all-trans-retinol or 9-cis-retinol. Also oxidizes long chain omega-hydroxy fatty acids, such as 20-HETE, producing both the intermediate aldehyde, 20-oxoarachidonate and the end product, a dicarboxylic acid, (5Z,8Z,11Z,14Z)-eicosatetraenedioate. Also catalyzes the reduction of benzoquinones. In Struthio camelus (Common ostrich), this protein is All-trans-retinol dehydrogenase [NAD(+)] ADH4.